The primary structure comprises 359 residues: GDSL esterase/lipase At2g30310 (359 aa).

The N-terminal stretch at 1-28 (MSTSKTIVFGLFVATLLVSCNVAANATT) is a signal peptide. The Nucleophile role is filled by S41. Residues N103 and N325 are each glycosylated (N-linked (GlcNAc...) asparagine). Catalysis depends on residues D333 and H336.

Belongs to the 'GDSL' lipolytic enzyme family.

The protein localises to the secreted. In Arabidopsis thaliana (Mouse-ear cress), this protein is GDSL esterase/lipase At2g30310.